Reading from the N-terminus, the 88-residue chain is EKC/KEOPS complex subunit SPAC4H3.13 (88 aa).

Belongs to the CTAG/PCC1 family. Component of the EKC/KEOPS complex composed of at least of SPAP27G11.07c/BUD32, cgi121, gon7, pgp2 and SPAC4H3.13/PCC1; the whole complex dimerizes.

Its subcellular location is the cytoplasm. It is found in the nucleus. The protein localises to the chromosome. The protein resides in the telomere. In terms of biological role, component of the EKC/KEOPS complex that is required for the formation of a threonylcarbamoyl group on adenosine at position 37 (t(6)A37) in tRNAs that read codons beginning with adenine. The complex is probably involved in the transfer of the threonylcarbamoyl moiety of threonylcarbamoyl-AMP (TC-AMP) to the N6 group of A37. SPAC4H3.13/PCC1 functions as a dimerization module for the complex. The EKC/KEOPS complex also promotes both telomere uncapping and telomere elongation. The complex is required for efficient recruitment of transcriptional coactivators. This is EKC/KEOPS complex subunit SPAC4H3.13 from Schizosaccharomyces pombe (strain 972 / ATCC 24843) (Fission yeast).